A 310-amino-acid chain; its full sequence is p-hydroxybenzoic acid efflux pump subunit AaeA (310 aa).

The chain crosses the membrane as a helical span at residues 12-32 (AITLVLVILAFIAIFRAWVYY).

This sequence belongs to the membrane fusion protein (MFP) (TC 8.A.1) family.

The protein resides in the cell inner membrane. Its function is as follows. Forms an efflux pump with AaeB. The polypeptide is p-hydroxybenzoic acid efflux pump subunit AaeA (Salmonella schwarzengrund (strain CVM19633)).